We begin with the raw amino-acid sequence, 302 residues long: Acetylglutamate kinase (302 aa).

Residues 68–69, arginine 90, and asparagine 194 each bind substrate; that span reads GG.

This sequence belongs to the acetylglutamate kinase family. ArgB subfamily.

It is found in the cytoplasm. It carries out the reaction N-acetyl-L-glutamate + ATP = N-acetyl-L-glutamyl 5-phosphate + ADP. The protein operates within amino-acid biosynthesis; L-arginine biosynthesis; N(2)-acetyl-L-ornithine from L-glutamate: step 2/4. Functionally, catalyzes the ATP-dependent phosphorylation of N-acetyl-L-glutamate. The protein is Acetylglutamate kinase of Acinetobacter baumannii (strain AB307-0294).